Reading from the N-terminus, the 131-residue chain is Peptide methionine sulfoxide reductase MsrB (131 aa).

One can recognise a MsrB domain in the interval Leu-8 to Arg-130. 4 residues coordinate Zn(2+): Cys-47, Cys-50, Cys-96, and Cys-99. Cys-119 serves as the catalytic Nucleophile.

The protein belongs to the MsrB Met sulfoxide reductase family. It depends on Zn(2+) as a cofactor.

It catalyses the reaction L-methionyl-[protein] + [thioredoxin]-disulfide + H2O = L-methionyl-(R)-S-oxide-[protein] + [thioredoxin]-dithiol. The polypeptide is Peptide methionine sulfoxide reductase MsrB (Pseudomonas putida (strain ATCC 47054 / DSM 6125 / CFBP 8728 / NCIMB 11950 / KT2440)).